Reading from the N-terminus, the 178-residue chain is uncharacterized protein (178 aa).

Positions 1 to 19 (MKKLLIVTMLFTLALSAQA) are cleaved as a signal peptide.

Belongs to the opacity porin family.

This is an uncharacterized protein from Haemophilus influenzae (strain ATCC 51907 / DSM 11121 / KW20 / Rd).